Reading from the N-terminus, the 575-residue chain is Homocysteine/cysteine synthase (575 aa).

Residue Lys376 is modified to N6-(pyridoxal phosphate)lysine.

It belongs to the trans-sulfuration enzymes family. MET7 subfamily. It depends on pyridoxal 5'-phosphate as a cofactor.

It localises to the cytoplasm. It carries out the reaction O-acetyl-L-homoserine + methanethiol = L-methionine + acetate + H(+). It catalyses the reaction O-acetyl-L-homoserine + hydrogen sulfide = L-homocysteine + acetate. The catalysed reaction is O-acetyl-L-serine + hydrogen sulfide = L-cysteine + acetate. The protein operates within amino-acid biosynthesis; L-methionine biosynthesis via de novo pathway; L-homocysteine from O-acetyl-L-homoserine. Its function is as follows. Plays a role in inorganic sulfur assimilation during sulfur-limited conditions; catalyzes the conversion of O-acetyl-L-homoserine (OAH) into homocysteine in the methionine biosynthesis pathway. Also catalyzes the conversion of O-acetylserine (OAS) into cysteine, the last step in the cysteine biosynthesis pathway. However, it seems that in S.cerevisiae cysteine biosynthesis occurs exclusively through the cystathionine pathway and not via direct incorporation of sulfur into OAS. It therefore has no metabolic role in cysteine biosynthesis and may only have a regulatory role controlling OAS levels. This chain is Homocysteine/cysteine synthase, found in Saccharomyces cerevisiae (strain ATCC 204508 / S288c) (Baker's yeast).